A 205-amino-acid chain; its full sequence is Small ribosomal subunit protein uS4 (205 aa).

The interval 18 to 46 (NIWGRPKSPVNRREYGPGQHGQRRKGKLS) is disordered. Residues 94 to 157 (RRLDTVVFRA…KQLAIVLEAT (64 aa)) enclose the S4 RNA-binding domain.

Belongs to the universal ribosomal protein uS4 family. As to quaternary structure, part of the 30S ribosomal subunit. Contacts protein S5. The interaction surface between S4 and S5 is involved in control of translational fidelity.

One of the primary rRNA binding proteins, it binds directly to 16S rRNA where it nucleates assembly of the body of the 30S subunit. Functionally, with S5 and S12 plays an important role in translational accuracy. This is Small ribosomal subunit protein uS4 from Bradyrhizobium sp. (strain BTAi1 / ATCC BAA-1182).